A 491-amino-acid polypeptide reads, in one-letter code: Aspartyl/glutamyl-tRNA(Asn/Gln) amidotransferase subunit B (491 aa).

The protein belongs to the GatB/GatE family. GatB subfamily. In terms of assembly, heterotrimer of A, B and C subunits.

It carries out the reaction L-glutamyl-tRNA(Gln) + L-glutamine + ATP + H2O = L-glutaminyl-tRNA(Gln) + L-glutamate + ADP + phosphate + H(+). The catalysed reaction is L-aspartyl-tRNA(Asn) + L-glutamine + ATP + H2O = L-asparaginyl-tRNA(Asn) + L-glutamate + ADP + phosphate + 2 H(+). Functionally, allows the formation of correctly charged Asn-tRNA(Asn) or Gln-tRNA(Gln) through the transamidation of misacylated Asp-tRNA(Asn) or Glu-tRNA(Gln) in organisms which lack either or both of asparaginyl-tRNA or glutaminyl-tRNA synthetases. The reaction takes place in the presence of glutamine and ATP through an activated phospho-Asp-tRNA(Asn) or phospho-Glu-tRNA(Gln). The sequence is that of Aspartyl/glutamyl-tRNA(Asn/Gln) amidotransferase subunit B from Nostoc sp. (strain PCC 7120 / SAG 25.82 / UTEX 2576).